The sequence spans 962 residues: Thrombospondin-3a (962 aa).

The N-terminal stretch at 1–23 is a signal peptide; sequence MEQMFVHIWVSLVVLMSVWSAQS. Residues 24–196 form the Laminin G-like domain; that stretch reads DKKQDVPVID…MDTLKLALGG (173 aa). In terms of domain architecture, EGF-like 1 spans 277–318; it reads PRSRCQPNPCFKGVSCMETFEYPGYRCGPCPDGMTGNGTHCQ. 20 disulfides stabilise this stretch: cysteine 281–cysteine 292, cysteine 286–cysteine 303, cysteine 306–cysteine 317, cysteine 323–cysteine 335, cysteine 329–cysteine 344, cysteine 347–cysteine 371, cysteine 377–cysteine 390, cysteine 384–cysteine 399, cysteine 402–cysteine 414, cysteine 420–cysteine 434, cysteine 428–cysteine 444, cysteine 446–cysteine 457, cysteine 473–cysteine 480, cysteine 485–cysteine 505, cysteine 521–cysteine 541, cysteine 544–cysteine 564, cysteine 580–cysteine 600, cysteine 603–cysteine 623, cysteine 641–cysteine 661, and cysteine 684–cysteine 704. An N-linked (GlcNAc...) asparagine glycan is attached at asparagine 313. An EGF-like 2; calcium-binding domain is found at 319–358; that stretch reads DIDECSEAQPCYTPGACVNTARGFTCESCPPGMWGPPLSG. Residues 373–412 form the EGF-like 3; calcium-binding domain; that stretch reads DIDECVDLANACTPNSVCINIIGSFRCGQCKTGYVGNQTA. Residue asparagine 409 is glycosylated (N-linked (GlcNAc...) asparagine). The 43-residue stretch at 416–458 folds into the EGF-like 4 domain; sequence PRKSCSSLSFNPCDANAHCVMQRNGDVSCACNVGWAGNGHTCG. TSP type-3 repeat units lie at residues 459-493, 494-529, 530-552, 553-588, 589-611, 612-649, 650-692, and 693-728; these read KDTD…NSGQ, EDAD…NKDQ, QNSD…NIDQ, KDTD…NPMQ, TDRD…NPMQ, TDVD…NSSQ, LDSD…NPNQ, and KDSD…EVTL. Residues 548 to 704 are disordered; the sequence is PNIDQKDTDS…SDSNGVGDVC (157 aa). A compositionally biased stretch (acidic residues) spans 557-570; it reads SNGEGDACDDDIDG. Over residues 631 to 641 the composition is skewed to basic and acidic residues; it reads GDGHQDTRDNC. Asparagine 646 carries an N-linked (GlcNAc...) asparagine glycan. Over residues 652–669 the composition is skewed to acidic residues; the sequence is SDNDGIGDDCDEDDDNDG. The N-linked (GlcNAc...) asparagine glycan is linked to asparagine 710. Cysteine 720 and cysteine 941 are disulfide-bonded. The TSP C-terminal domain maps to 732–946; sequence RAYQTVILDP…LRYRCNDTVP (215 aa). A glycan (N-linked (GlcNAc...) asparagine) is linked at asparagine 942.

The protein belongs to the thrombospondin family. As to quaternary structure, oligomer; disulfide-linked.

Functionally, adhesive glycoprotein that mediates cell-to-cell and cell-to-matrix interactions. Can bind to fibrinogen, fibronectin, laminin and type V collagen. This chain is Thrombospondin-3a (thbs3a), found in Danio rerio (Zebrafish).